The chain runs to 402 residues: Nicotinate phosphoribosyltransferase (402 aa).

His-226 carries the post-translational modification Phosphohistidine; by autocatalysis.

The protein belongs to the NAPRTase family. Post-translationally, transiently phosphorylated on a His residue during the reaction cycle. Phosphorylation strongly increases the affinity for substrates and increases the rate of nicotinate D-ribonucleotide production. Dephosphorylation regenerates the low-affinity form of the enzyme, leading to product release.

It carries out the reaction nicotinate + 5-phospho-alpha-D-ribose 1-diphosphate + ATP + H2O = nicotinate beta-D-ribonucleotide + ADP + phosphate + diphosphate. It participates in cofactor biosynthesis; NAD(+) biosynthesis; nicotinate D-ribonucleotide from nicotinate: step 1/1. In terms of biological role, catalyzes the synthesis of beta-nicotinate D-ribonucleotide from nicotinate and 5-phospho-D-ribose 1-phosphate at the expense of ATP. This Chromobacterium violaceum (strain ATCC 12472 / DSM 30191 / JCM 1249 / CCUG 213 / NBRC 12614 / NCIMB 9131 / NCTC 9757 / MK) protein is Nicotinate phosphoribosyltransferase.